The sequence spans 204 residues: Refilin-A (204 aa).

Residues 1-52 (MVGHLHLQAMGDTREQSRDGLLDSPDSGLPPSPSPSPPFYALSPGTLDTRTT) are disordered. A compositionally biased stretch (basic and acidic residues) spans 12–21 (DTREQSRDGL). Residues 28 to 38 (GLPPSPSPSPP) are compositionally biased toward pro residues. R151 carries the asymmetric dimethylarginine modification.

Belongs to the Refilin family. As to quaternary structure, interacts with FLNA and FLNB. Detected in various tissues, with highest expression in lung, followed by spleen.

It is found in the cytoplasm. The protein localises to the cytoskeleton. Its function is as follows. Involved in the regulation of the perinuclear actin network and nuclear shape through interaction with filamins. Plays an essential role in the formation of cartilaginous skeletal elements. The chain is Refilin-A (Rflna) from Mus musculus (Mouse).